Reading from the N-terminus, the 349-residue chain is Cyclic amide hydrolase (349 aa).

The tract at residues 1–90 (MTSPEDTAGV…AVFVDDPASS (90 aa)) is RU A. Arginine 38 serves as a coordination point for substrate. Residues 99-231 (GLSIGVTTTA…AAVLVMGNSP (133 aa)) are RU B. The active site involves lysine 149. Substrate contacts are provided by residues arginine 176, 214–215 (SA), lysine 311, and 330–331 (SG). Serine 214 serves as the catalytic Nucleophile. The tract at residues 237 to 349 (YRIGHGVLRD…GGGTVAVIAR (113 aa)) is RU C.

This sequence belongs to the cyclic amide hydrolase (CyAH) family. Homotetramer.

In terms of biological role, cyclic amide hydrolase of unknown substrate specificity. Catalyzes the hydrolytic ring-opening of a cyclic amide. Does not act on cyanuric acid nor barbituric acid. In Rhodococcus sp, this protein is Cyclic amide hydrolase.